A 411-amino-acid chain; its full sequence is Acetyl-coenzyme A carboxylase carboxyl transferase subunit beta, chloroplastic (411 aa).

One can recognise a CoA carboxyltransferase N-terminal domain in the interval 32–302; it reads LWTRCDHCGV…KEQGRIPYGE (271 aa). 4 residues coordinate Zn(2+): cysteine 36, cysteine 39, cysteine 55, and cysteine 58. Residues 36 to 58 form a C4-type zinc finger; it reads CDHCGVILYIKHLKENQRVCFGC.

The protein belongs to the AccD/PCCB family. As to quaternary structure, acetyl-CoA carboxylase is a heterohexamer composed of biotin carboxyl carrier protein, biotin carboxylase and 2 subunits each of ACCase subunit alpha and ACCase plastid-coded subunit beta (accD). Zn(2+) is required as a cofactor.

Its subcellular location is the plastid. The protein resides in the chloroplast stroma. The catalysed reaction is N(6)-carboxybiotinyl-L-lysyl-[protein] + acetyl-CoA = N(6)-biotinyl-L-lysyl-[protein] + malonyl-CoA. The protein operates within lipid metabolism; malonyl-CoA biosynthesis; malonyl-CoA from acetyl-CoA: step 1/1. Its function is as follows. Component of the acetyl coenzyme A carboxylase (ACC) complex. Biotin carboxylase (BC) catalyzes the carboxylation of biotin on its carrier protein (BCCP) and then the CO(2) group is transferred by the transcarboxylase to acetyl-CoA to form malonyl-CoA. This Chlorella vulgaris (Green alga) protein is Acetyl-coenzyme A carboxylase carboxyl transferase subunit beta, chloroplastic.